A 328-amino-acid chain; its full sequence is Ethanol acetyltransferase 1 (328 aa).

The AB hydrolase-1 domain maps to 39–309 (PAIINIHGLL…TGHNLLLENP (271 aa)). Catalysis depends on charge relay system residues S115, D139, and H302.

The protein belongs to the AB hydrolase superfamily.

The protein localises to the mitochondrion. The enzyme catalyses ethanol + acetyl-CoA = ethyl acetate + CoA. It catalyses the reaction acetyl-CoA + H2O = acetate + CoA + H(+). It carries out the reaction ethyl acetate + H2O = ethanol + acetate + H(+). Alcohol acetyltransferase that catalyzes the synthesis of ethyl acetate from ethanol and acetyl-CoA. Can also function as a thioesterase by hydrolyzing acetyl-CoA in the absence of ethanol, as well as esterase hydrolyzing ethyl acetate. The protein is Ethanol acetyltransferase 1 of Saccharomyces cerevisiae (strain ATCC 204508 / S288c) (Baker's yeast).